A 913-amino-acid chain; its full sequence is DNA mismatch repair protein MutS (913 aa).

720–727 (GPNASGKS) is a binding site for ATP.

The protein belongs to the DNA mismatch repair MutS family.

In terms of biological role, this protein is involved in the repair of mismatches in DNA. It is possible that it carries out the mismatch recognition step. This protein has a weak ATPase activity. This is DNA mismatch repair protein MutS from Prochlorococcus marinus (strain AS9601).